A 366-amino-acid polypeptide reads, in one-letter code: E3 ubiquitin-protein ligase SINA-like 1 (366 aa).

Residues 1-37 are disordered; sequence MVKGTNAEQALAREEASSSRPKRQRVPSIVEEEGENG. The RING-type; degenerate zinc finger occupies 56 to 92; the sequence is CPICCNALTIPIFQCDKGHIACSSCCTNVSNKCPYCS. Residues 106–354 are SBD; the sequence is VVEAFIVRCP…KGTYICIRSL (249 aa). The SIAH-type; degenerate zinc-finger motif lies at 109–232; sequence AFIVRCPIVA…LYSHYAANHK (124 aa). Positions 114, 186, 198, 202, 209, 214, 226, and 231 each coordinate Zn(2+).

Belongs to the SINA (Seven in absentia) family.

The enzyme catalyses S-ubiquitinyl-[E2 ubiquitin-conjugating enzyme]-L-cysteine + [acceptor protein]-L-lysine = [E2 ubiquitin-conjugating enzyme]-L-cysteine + N(6)-ubiquitinyl-[acceptor protein]-L-lysine.. The protein operates within protein modification; protein ubiquitination. Its function is as follows. E3 ubiquitin-protein ligase that mediates ubiquitination and subsequent proteasomal degradation of target proteins. E3 ubiquitin ligases accept ubiquitin from an E2 ubiquitin-conjugating enzyme in the form of a thioester and then directly transfers the ubiquitin to targeted substrates. It probably triggers the ubiquitin-mediated degradation of different substrates. This Arabidopsis thaliana (Mouse-ear cress) protein is E3 ubiquitin-protein ligase SINA-like 1.